The chain runs to 47 residues: Wound-induced basic protein (47 aa).

The interval 1–47 is disordered; it reads MIYDVNSPLFRSFLSQKGGSSDKRKTEEQKPKEHRPKASENKPIMTE. Basic and acidic residues predominate over residues 20–40; sequence SSDKRKTEEQKPKEHRPKASE.

In terms of tissue distribution, abundant in radicals and epicotyls of seedlings and higher in the roots than in stems and leaves of mature plants.

This is Wound-induced basic protein (PR4) from Phaseolus vulgaris (Kidney bean).